Consider the following 177-residue polypeptide: ATP synthase subunit delta (177 aa).

This sequence belongs to the ATPase delta chain family. In terms of assembly, F-type ATPases have 2 components, F(1) - the catalytic core - and F(0) - the membrane proton channel. F(1) has five subunits: alpha(3), beta(3), gamma(1), delta(1), epsilon(1). F(0) has three main subunits: a(1), b(2) and c(10-14). The alpha and beta chains form an alternating ring which encloses part of the gamma chain. F(1) is attached to F(0) by a central stalk formed by the gamma and epsilon chains, while a peripheral stalk is formed by the delta and b chains.

It is found in the cell inner membrane. Functionally, f(1)F(0) ATP synthase produces ATP from ADP in the presence of a proton or sodium gradient. F-type ATPases consist of two structural domains, F(1) containing the extramembraneous catalytic core and F(0) containing the membrane proton channel, linked together by a central stalk and a peripheral stalk. During catalysis, ATP synthesis in the catalytic domain of F(1) is coupled via a rotary mechanism of the central stalk subunits to proton translocation. Its function is as follows. This protein is part of the stalk that links CF(0) to CF(1). It either transmits conformational changes from CF(0) to CF(1) or is implicated in proton conduction. This is ATP synthase subunit delta from Shewanella baltica (strain OS223).